The following is a 355-amino-acid chain: UDP-N-acetylglucosamine--N-acetylmuramyl-(pentapeptide) pyrophosphoryl-undecaprenol N-acetylglucosamine transferase (355 aa).

Residues 15–17 (TGG), Asn127, Arg163, Ser191, Ile245, 264–269 (ALTVSE), and Gln289 each bind UDP-N-acetyl-alpha-D-glucosamine.

Belongs to the glycosyltransferase 28 family. MurG subfamily.

The protein resides in the cell inner membrane. The enzyme catalyses di-trans,octa-cis-undecaprenyl diphospho-N-acetyl-alpha-D-muramoyl-L-alanyl-D-glutamyl-meso-2,6-diaminopimeloyl-D-alanyl-D-alanine + UDP-N-acetyl-alpha-D-glucosamine = di-trans,octa-cis-undecaprenyl diphospho-[N-acetyl-alpha-D-glucosaminyl-(1-&gt;4)]-N-acetyl-alpha-D-muramoyl-L-alanyl-D-glutamyl-meso-2,6-diaminopimeloyl-D-alanyl-D-alanine + UDP + H(+). The protein operates within cell wall biogenesis; peptidoglycan biosynthesis. Its function is as follows. Cell wall formation. Catalyzes the transfer of a GlcNAc subunit on undecaprenyl-pyrophosphoryl-MurNAc-pentapeptide (lipid intermediate I) to form undecaprenyl-pyrophosphoryl-MurNAc-(pentapeptide)GlcNAc (lipid intermediate II). This chain is UDP-N-acetylglucosamine--N-acetylmuramyl-(pentapeptide) pyrophosphoryl-undecaprenol N-acetylglucosamine transferase, found in Yersinia enterocolitica serotype O:8 / biotype 1B (strain NCTC 13174 / 8081).